A 382-amino-acid polypeptide reads, in one-letter code: MSDPIIIIGSGFAAYQLVKSVRRLDAHIPIQIFTADDGAEYNKPDLSHVFSKRQTAADLVVKSGEAFATEHNVQLHAHTQVERVLTQQQQVVANGRCYPYSKLVFATGAQAFVPPMRGDGLAKVMTLNSLQEYQAAEQPLSRAQHVLVIGGGLIGVEIALDLATSGKQVTVVEPNARLLANLLPEFIALPLEQQLMKHGIQLALNSRVESVTVQGQTLAIALHDGREFAVDAVLCAAGLKANTAVAREAGLSVERGICVDLQLNTSDPHIYALGDCAQIEGRMLPYLQPIVLSANVLAKQLVGQEARLTLPPMMVKVKTPSYPIQLAGDFSPESHWQVQLSPEGIVAKAQSSLGDFTGFVVTGEYVTQAFPLLRELSQRANG.

It belongs to the FAD-dependent oxidoreductase family. FAD is required as a cofactor.

It localises to the cytoplasm. It carries out the reaction 2 reduced [nitric oxide reductase rubredoxin domain] + NAD(+) + H(+) = 2 oxidized [nitric oxide reductase rubredoxin domain] + NADH. Its pathway is nitrogen metabolism; nitric oxide reduction. Functionally, one of at least two accessory proteins for anaerobic nitric oxide (NO) reductase. Reduces the rubredoxin moiety of NO reductase. The chain is Nitric oxide reductase FlRd-NAD(+) reductase from Vibrio vulnificus (strain YJ016).